Consider the following 122-residue polypeptide: Large ribosomal subunit protein uL18 (122 aa).

It belongs to the universal ribosomal protein uL18 family. In terms of assembly, part of the 50S ribosomal subunit; part of the 5S rRNA/L5/L18/L25 subcomplex. Contacts the 5S and 23S rRNAs.

Functionally, this is one of the proteins that bind and probably mediate the attachment of the 5S RNA into the large ribosomal subunit, where it forms part of the central protuberance. This chain is Large ribosomal subunit protein uL18, found in Kosmotoga olearia (strain ATCC BAA-1733 / DSM 21960 / TBF 19.5.1).